The primary structure comprises 1198 residues: Spindle-defective protein 5 (1198 aa).

A compositionally biased stretch (polar residues) spans 1–10 (MEDNSVLNED). The interval 1 to 45 (MEDNSVLNEDSNLEHVEGQPRRSMSQPVLNVEGDKRTSSTSATQQ) is disordered. Coiled coils occupy residues 67-381 (EENK…QLTG), 566-603 (HDVA…FEEI), 694-916 (KFTS…LSTS), 983-1035 (DELC…ENVP), and 1127-1175 (KNET…EFQD).

The protein resides in the cytoplasm. It is found in the cytoskeleton. It localises to the microtubule organizing center. The protein localises to the centrosome. Functionally, plays a central role in centrosome maturation and mitotic spindle assembly during the first division of the zygote. Required for the centrosomal localization of air-1 and zyg-9. Probably not required in late embryogenesis and during larval development. In Caenorhabditis elegans, this protein is Spindle-defective protein 5 (spd-5).